A 139-amino-acid polypeptide reads, in one-letter code: Actin-depolymerizing factor 1 (139 aa).

Residues 5-139 (ASGMAVHDDC…DLDVFRSRAN (135 aa)) enclose the ADF-H domain. A Phosphoserine; by CPK3 modification is found at serine 6.

The protein belongs to the actin-binding proteins ADF family. As to quaternary structure, interacts with the 14-3-3-like protein GRF6/AFT1. In terms of processing, phosphorylation at Ser-6 by CPK3/CDPK6 inhibits actin-depolimerizing activity. In terms of tissue distribution, expressed in vascular tissues of all organs.

It is found in the cytoplasm. It localises to the cytoskeleton. Actin-depolymerizing protein. Stimulates F-actin depolymerization. Involved in plant development, cell organ expansion and flowering by controlling breakdown of thick actin cables. Severs actin filaments or bundles and promotes actin cytoskeleton disassembly. Binds monomeric actin (G-actin) with a marked preference for the ADP-loaded form and inhibits the rate of nucleotide exchange on G-actin. The sequence is that of Actin-depolymerizing factor 1 (ADF1) from Arabidopsis thaliana (Mouse-ear cress).